A 606-amino-acid polypeptide reads, in one-letter code: MSRSSPSLRLPVLLLLLLLLLLPPPPPVLPADPGAPAPVNPCCYFPCQHQGVCVRVALDRYQCDCTRTGYSGPNCTVPDLWTWLRSSLRPSPTFVHYLLTHVRWFWEFVNATFIRDTLMRLVLTVRSNLIPSPPTYNLDYDYISWEAFSNVSYYTRVLPSVPKDCPTPMGTKGKKQLPDAQVLAHRFLLRRTFIPDPQGTNLMFAFFAQHFTHQFFKTSGKMGPGFTKALGHGVDLGHIYGDSLERQYHLRLFKDGKLKYQVLDGEVYPPSVEEAPVLMHYPRGVPPRSQMAVGQEVFGLLPGLMLYATLWLREHNRVCDLLKAEHPTWDDEQLFQTTRLILIGETIKIVIEEYVQQLSGYFLQLKFDPEMLFSVQFQYRNRIAMEFNHLYHWHPLMPDSFQVGSQEYSYEQFLFNTSMLVDYGVEALVDAFSRQSAGRIGGGRNIDHHVLHVAVEVIKESREMRLQPFNEYRKRFGLKPYASFQELTGETEMAAELEELYGDIDALEFYPGLLLEKCQPNSIFGESMIEIGAPFSLKGLLGNPICSPEYWKPSTFGGEVGSNLIKTATLKKLVCLNTKTCPYVSFRVPRSSGDDGPAAERRSTEL.

The N-terminal stretch at 1–30 (MSRSSPSLRLPVLLLLLLLLLLPPPPPVLP) is a signal peptide. The EGF-like domain occupies 38 to 76 (PVNPCCYFPCQHQGVCVRVALDRYQCDCTRTGYSGPNCT). 4 disulfides stabilise this stretch: C42–C53, C43–C165, C47–C63, and C65–C75. N-linked (GlcNAc...) asparagine glycans are attached at residues N74, N110, and N150. The active-site Proton acceptor is the H213. Y391 acts as the For cyclooxygenase activity in catalysis. A heme b-binding site is contributed by H394. N416 carries N-linked (GlcNAc...) asparagine glycosylation. C575 and C581 are joined by a disulfide.

It belongs to the prostaglandin G/H synthase family. Homodimer. The cofactor is heme b.

Its subcellular location is the microsome membrane. It localises to the endoplasmic reticulum membrane. It catalyses the reaction (5Z,8Z,11Z,14Z)-eicosatetraenoate + AH2 + 2 O2 = prostaglandin H2 + A + H2O. The enzyme catalyses (5Z,8Z,11Z,14Z)-eicosatetraenoate + 2 O2 = prostaglandin G2. It carries out the reaction prostaglandin G2 + AH2 = prostaglandin H2 + A + H2O. The catalysed reaction is (9Z,12Z)-octadecadienoate + AH2 + O2 = (9R)-hydroxy-(10E,12Z)-octadecadienoate + A + H2O. It catalyses the reaction (9Z,12Z)-octadecadienoate + AH2 + O2 = (9S)-hydroxy-(10E,12Z)-octadecadienoate + A + H2O. The enzyme catalyses (9Z,12Z)-octadecadienoate + AH2 + O2 = (13S)-hydroxy-(9Z,11E)-octadecadienoate + A + H2O. It carries out the reaction (9Z,12Z)-octadecadienoate + AH2 + O2 = (13R)-hydroxy-(9Z,11E)-octadecadienoate + A + H2O. It functions in the pathway lipid metabolism; prostaglandin biosynthesis. Its activity is regulated as follows. The cyclooxygenase activity is inhibited by nonsteroidal anti-inflammatory drugs (NSAIDs) including ibuprofen, flurbiprofen, ketoprofen, naproxen, flurbiprofen, anirolac, fenclofenac and diclofenac. In terms of biological role, dual cyclooxygenase and peroxidase that plays an important role in the biosynthesis pathway of prostanoids, a class of C20 oxylipins mainly derived from arachidonate ((5Z,8Z,11Z,14Z)-eicosatetraenoate, AA, C20:4(n-6)), with a particular role in the inflammatory response. The cyclooxygenase activity oxygenates AA to the hydroperoxy endoperoxide prostaglandin G2 (PGG2), and the peroxidase activity reduces PGG2 to the hydroxy endoperoxide prostaglandin H2 (PGH2), the precursor of all 2-series prostaglandins and thromboxanes. This complex transformation is initiated by abstraction of hydrogen at carbon 13 (with S-stereochemistry), followed by insertion of molecular O2 to form the endoperoxide bridge between carbon 9 and 11 that defines prostaglandins. The insertion of a second molecule of O2 (bis-oxygenase activity) yields a hydroperoxy group in PGG2 that is then reduced to PGH2 by two electrons. Involved in the constitutive production of prostanoids in particular in the stomach and platelets. In gastric epithelial cells, it is a key step in the generation of prostaglandins, such as prostaglandin E2 (PGE2), which plays an important role in cytoprotection. In platelets, it is involved in the generation of thromboxane A2 (TXA2), which promotes platelet activation and aggregation, vasoconstriction and proliferation of vascular smooth muscle cells. Can also use linoleate (LA, (9Z,12Z)-octadecadienoate, C18:2(n-6)) as substrate and produce hydroxyoctadecadienoates (HODEs) in a regio- and stereospecific manner, being (9R)-HODE ((9R)-hydroxy-(10E,12Z)-octadecadienoate) and (13S)-HODE ((13S)-hydroxy-(9Z,11E)-octadecadienoate) its major products. This is Prostaglandin G/H synthase 1 (PTGS1) from Oryctolagus cuniculus (Rabbit).